Reading from the N-terminus, the 760-residue chain is Probable ubiquitin carboxyl-terminal hydrolase creB (760 aa).

The disordered stretch occupies residues 1-28 (MGSFLRSFRNNAGSTTPSVGAVPAKKEV). Over residues 8 to 18 (FRNNAGSTTPS) the composition is skewed to polar residues. The USP domain maps to 55 to 469 (YGMENYGNTC…CAYVLFYQET (415 aa)). Residue cysteine 64 is the Nucleophile of the active site. Disordered regions lie at residues 114 to 146 (AEAQ…DSPD) and 242 to 270 (PAAI…KTPN). Residues 258 to 270 (VDQSASSGSKTPN) show a composition bias toward polar residues. Catalysis depends on histidine 420, which acts as the Proton acceptor. Positions 520–760 (EEHNRPNGLK…LRKKSFSILS (241 aa)) are disordered. The stretch at 575-635 (KSDVQGKKER…AALEASKASK (61 aa)) forms a coiled coil. Composition is skewed to basic and acidic residues over residues 578–626 (VQGK…ELKA), 635–651 (KAQE…KDKL), and 708–742 (DPKD…ERTG). Residues 743–760 (HGKWRSFSLRKKSFSILS) show a composition bias toward basic residues.

This sequence belongs to the peptidase C19 family. Interacts with creA, creC and qutD.

It carries out the reaction Thiol-dependent hydrolysis of ester, thioester, amide, peptide and isopeptide bonds formed by the C-terminal Gly of ubiquitin (a 76-residue protein attached to proteins as an intracellular targeting signal).. Its function is as follows. Ubiquitin thioesterase component of the regulatory network controlling carbon source utilization through ubiquitination and deubiquitination involving creA, creB, creC, creD and acrB. Deubiquitinates the creA catabolic repressor and the quinate permease qutD. Also plays a role in response to carbon starvation and the control of extracellular proteases activity. The protein is Probable ubiquitin carboxyl-terminal hydrolase creB (creB) of Aspergillus clavatus (strain ATCC 1007 / CBS 513.65 / DSM 816 / NCTC 3887 / NRRL 1 / QM 1276 / 107).